The chain runs to 363 residues: Fructose-1,6-bisphosphate aldolase/phosphatase (363 aa).

Catalysis depends on Asp11, which acts as the Proton acceptor; for FBP phosphatase activity. The Mg(2+) site is built by Asp11, His18, Asp51, and Asp52. His18 is a binding site for beta-D-fructose 1,6-bisphosphate. His18 contacts dihydroxyacetone phosphate. Tyr89 contacts beta-D-fructose 1,6-bisphosphate. Gln93 is a Mg(2+) binding site. Gly102–Asn103 provides a ligand contact to beta-D-fructose 1,6-bisphosphate. Asp130 provides a ligand contact to Mg(2+). Residue Lys131 coordinates beta-D-fructose 1,6-bisphosphate. Lys131 is a dihydroxyacetone phosphate binding site. The active-site Proton donor/acceptor; for FBP aldolase activity is the Tyr230. Lys233, Asp234, and Asp235 together coordinate Mg(2+). Residue Lys233 is the Schiff-base intermediate with DHAP; for FBP aldolase activity of the active site. Residues Gln243–Lys244, Arg267, and Tyr348 contribute to the beta-D-fructose 1,6-bisphosphate site. Arg267 serves as a coordination point for dihydroxyacetone phosphate.

The protein belongs to the FBP aldolase/phosphatase family. As to quaternary structure, homooctamer; dimer of tetramers. It depends on Mg(2+) as a cofactor.

It catalyses the reaction beta-D-fructose 1,6-bisphosphate + H2O = beta-D-fructose 6-phosphate + phosphate. The enzyme catalyses beta-D-fructose 1,6-bisphosphate = D-glyceraldehyde 3-phosphate + dihydroxyacetone phosphate. It functions in the pathway carbohydrate biosynthesis; gluconeogenesis. Catalyzes two subsequent steps in gluconeogenesis: the aldol condensation of dihydroxyacetone phosphate (DHAP) and glyceraldehyde-3-phosphate (GA3P) to fructose-1,6-bisphosphate (FBP), and the dephosphorylation of FBP to fructose-6-phosphate (F6P). The polypeptide is Fructose-1,6-bisphosphate aldolase/phosphatase (Thermus thermophilus (strain ATCC BAA-163 / DSM 7039 / HB27)).